The sequence spans 88 residues: Cytochrome c oxidase subunit 6B2 (88 aa).

The CHCH domain occupies T29 to W75. The Cx9C motif signature appears at C32–C42. Disulfide bonds link C32/C67 and C42/C56. The Cx10C motif signature appears at C56 to C67.

This sequence belongs to the cytochrome c oxidase subunit 6B family. In terms of assembly, component of the cytochrome c oxidase (complex IV, CIV), a multisubunit enzyme composed of 14 subunits. The complex is composed of a catalytic core of 3 subunits MT-CO1, MT-CO2 and MT-CO3, encoded in the mitochondrial DNA, and 11 supernumerary subunits COX4I1 (or COX4I2), COX5A, COX5B, COX6A2 (or COX6A1), COX6B1 (or COX6B2), COX6C, COX7A1 (or COX7A2), COX7B, COX7C, COX8B and NDUFA4, which are encoded in the nuclear genome. The complex exists as a monomer or a dimer and forms supercomplexes (SCs) in the inner mitochondrial membrane with NADH-ubiquinone oxidoreductase (complex I, CI) and ubiquinol-cytochrome c oxidoreductase (cytochrome b-c1 complex, complex III, CIII), resulting in different assemblies (supercomplex SCI(1)III(2)IV(1) and megacomplex MCI(2)III(2)IV(2)). As to expression, testis specific.

Its subcellular location is the mitochondrion inner membrane. Its pathway is energy metabolism; oxidative phosphorylation. Functionally, component of the cytochrome c oxidase, the last enzyme in the mitochondrial electron transport chain which drives oxidative phosphorylation. The respiratory chain contains 3 multisubunit complexes succinate dehydrogenase (complex II, CII), ubiquinol-cytochrome c oxidoreductase (cytochrome b-c1 complex, complex III, CIII) and cytochrome c oxidase (complex IV, CIV), that cooperate to transfer electrons derived from NADH and succinate to molecular oxygen, creating an electrochemical gradient over the inner membrane that drives transmembrane transport and the ATP synthase. Cytochrome c oxidase is the component of the respiratory chain that catalyzes the reduction of oxygen to water. Electrons originating from reduced cytochrome c in the intermembrane space (IMS) are transferred via the dinuclear copper A center (CU(A)) of subunit 2 and heme A of subunit 1 to the active site in subunit 1, a binuclear center (BNC) formed by heme A3 and copper B (CU(B)). The BNC reduces molecular oxygen to 2 water molecules using 4 electrons from cytochrome c in the IMS and 4 protons from the mitochondrial matrix. The sequence is that of Cytochrome c oxidase subunit 6B2 (COX6B2) from Bos taurus (Bovine).